A 356-amino-acid chain; its full sequence is Solute carrier family 25 member 3 (356 aa).

Residues 1 to 44 (MFSSVAHLARANPFNAPHLQLVHDVSGPRSPPGPPRRSRHLAAA) constitute a mitochondrion transit peptide. Topologically, residues 45 to 57 (AVEGYSCEFGSMK) are mitochondrial intermembrane. 3 Solcar repeats span residues 57 to 141 (KYYA…FKAL), 154 to 238 (WRTS…TVEA), and 255 to 333 (EQLV…VKVY). The chain crosses the membrane as a helical span at residues 58-80 (YYALCGFGGVLSCGLTHTAVVPL). Over 81–115 (DLVKCRMQVDPQKYKGIFNGFSITLKEDGVRGLAK) the chain is Mitochondrial matrix. The residue at position 93 (K93) is an N6-acetyllysine. K106 bears the N6-methyllysine mark. The helical transmembrane segment at 116–135 (GWAPTLIGYSMQGLCKFGFY) threads the bilayer. Residues 136-155 (EVFKALYSNILGEENTYLWR) lie on the Mitochondrial intermembrane side of the membrane. Residues 156-177 (TSLYLAASASAEFFADIALAPM) traverse the membrane as a helical segment. The Mitochondrial matrix portion of the chain corresponds to 178–212 (EAAKVRIQTQPGYANTLREAVPKMYKEEGLNAFYK). Residue Y190 is modified to Phosphotyrosine. K203 bears the N6-acetyllysine mark. The chain crosses the membrane as a helical span at residues 213–232 (GVAPVWMRQIPYTMMKFACF). At 233-255 (ERTVEALYKFVVPKPRSECTKAE) the chain is on the mitochondrial intermembrane side. The chain crosses the membrane as a helical span at residues 256 to 278 (QLVVTFVAGYIAGVFCAIVSHPA). Topologically, residues 279 to 308 (DSVVSVLNKEKGSTASQVLQRLGFRGVWKG) are mitochondrial matrix. The chain crosses the membrane as a helical span at residues 309–327 (LFARIIMIGTLTALQWFIY). Residues 328-356 (DSVKVYFRLPRPPPPEMPESLKKKLGLTE) are Mitochondrial intermembrane-facing.

It belongs to the mitochondrial carrier (TC 2.A.29) family. Interacts with PPIF; the interaction is impaired by CsA.

The protein resides in the mitochondrion inner membrane. It carries out the reaction phosphate(in) + H(+)(in) = phosphate(out) + H(+)(out). Inorganic ion transporter that transports phosphate or copper ions across the mitochondrial inner membrane into the matrix compartment. Mediates proton-coupled symport of phosphate ions necessary for mitochondrial oxidative phosphorylation of ADP to ATP. Transports copper ions probably in the form of anionic copper(I) complexes to maintain mitochondrial matrix copper pool and to supply copper for cytochrome C oxidase complex assembly. May also play a role in regulation of the mitochondrial permeability transition pore (mPTP). The polypeptide is Solute carrier family 25 member 3 (Rattus norvegicus (Rat)).